A 119-amino-acid polypeptide reads, in one-letter code: Holo-[acyl-carrier-protein] synthase (119 aa).

Residues Asp8 and Glu58 each coordinate Mg(2+).

It belongs to the P-Pant transferase superfamily. AcpS family. It depends on Mg(2+) as a cofactor.

The protein resides in the cytoplasm. It carries out the reaction apo-[ACP] + CoA = holo-[ACP] + adenosine 3',5'-bisphosphate + H(+). In terms of biological role, transfers the 4'-phosphopantetheine moiety from coenzyme A to a Ser of acyl-carrier-protein. The polypeptide is Holo-[acyl-carrier-protein] synthase (Lactobacillus johnsonii (strain CNCM I-12250 / La1 / NCC 533)).